Reading from the N-terminus, the 1119-residue chain is GATOR2 complex protein MIOS (1119 aa).

A WD 1 repeat occupies 3 to 43; sequence QSSTRKRLIQWSPHNKSSFIVGSNDLRLYNFKFKDKNEKKN. The tract at residues 41–60 is disordered; that stretch reads KKNENNINNSNQYNQNNQQQ. The segment covering 45–60 has biased composition (low complexity); sequence NNINNSNQYNQNNQQQ. WD repeat units lie at residues 127-169, 183-227, 281-321, 324-364, and 368-409; these read KTIS…ILTS, KHTR…STTL, TQSE…SSQS, AHQK…DPLI, and SNCK…EFSK. The disordered stretch occupies residues 413 to 455; the sequence is LESTTLSTGGGGSGSNTSNNLNKRSTSNNNNSQDPINTISKPT. Residues 427–444 are compositionally biased toward low complexity; it reads SNTSNNLNKRSTSNNNNS. A WD 7 repeat occupies 459 to 499; the sequence is HSSDVVSSFSWHPTNECRMLTVSYSGVIDVVSLNENIPISW. Residues 601–669 are disordered; the sequence is PSISTTTPGG…NNNNNNNNNN (69 aa). A C4-type zinc finger spans residues 973–1016; the sequence is AKCGFCQNSFAFESISASSIVGRNASSKPNFKAKVPFCPHCKQS. C975, C978, C1010, C1013, C1023, C1085, C1088, H1090, H1093, H1096, C1107, C1112, and C1116 together coordinate Zn(2+).

Belongs to the WD repeat mio family. In terms of assembly, probably part of the GATOR complex.

It localises to the lysosome membrane. Functionally, as a component of the GATOR complex may function in the amino acid-sensing branch of the TORC1 signaling pathway. In Dictyostelium discoideum (Social amoeba), this protein is GATOR2 complex protein MIOS.